The primary structure comprises 254 residues: Flavin-dependent thymidylate synthase (254 aa).

A ThyX domain is found at 7-237 (LRVQLIARTE…PAVFADFEIY (231 aa)). Residues Ser-71, 95–97 (RHR), and Gln-103 contribute to the FAD site. DUMP contacts are provided by residues 92 to 95 (ELIR), 103 to 107 (QLSQR), and Arg-176. The short motif at 95–105 (RHRHFSYSQLS) is the ThyX motif element. Residues 192–194 (NYR) and His-198 each bind FAD. Arg-203 contributes to the dUMP binding site. The Involved in ionization of N3 of dUMP, leading to its activation role is filled by Arg-203.

This sequence belongs to the thymidylate synthase ThyX family. As to quaternary structure, homotetramer. Requires FAD as cofactor.

The catalysed reaction is dUMP + (6R)-5,10-methylene-5,6,7,8-tetrahydrofolate + NADPH + H(+) = dTMP + (6S)-5,6,7,8-tetrahydrofolate + NADP(+). It functions in the pathway pyrimidine metabolism; dTTP biosynthesis. Catalyzes the reductive methylation of 2'-deoxyuridine-5'-monophosphate (dUMP) to 2'-deoxythymidine-5'-monophosphate (dTMP) while utilizing 5,10-methylenetetrahydrofolate (mTHF) as the methyl donor, and NADPH and FADH(2) as the reductant. The chain is Flavin-dependent thymidylate synthase from Mycobacterium sp. (strain KMS).